The following is a 111-amino-acid chain: Ig kappa chain V-III region PC 2485/PC 4039 (111 aa).

The interval 1-23 (DIVLTQSPASLAVSLGQRATISC) is framework-1. C23 and C92 are oxidised to a cystine. Positions 24-38 (RASKSVSTSGYSYMH) are complementarity-determining-1. Residues 39-53 (WYQQKPGQPPKLLIY) form a framework-2 region. Residues 54 to 60 (LASSLES) form a complementarity-determining-2 region. Positions 61–92 (GVPARFSGSGSGTDFTLNIQPVEEEDAAIYYC) are framework-3. The segment at 93 to 101 (QHSRELPLT) is complementarity-determining-3. The interval 102-111 (FGAGTKLELK) is framework-4.

In Mus musculus (Mouse), this protein is Ig kappa chain V-III region PC 2485/PC 4039.